A 376-amino-acid chain; its full sequence is D-alanine--D-alanine ligase (376 aa).

Positions 150 to 358 (KIIFEKEGLP…YSELINKLIE (209 aa)) constitute an ATP-grasp domain. 183–238 (EGRLTYPCFVKPSNAGSSVGVNKASDRESLVKALNIAAKNDRRILVEEFINGREIE) provides a ligand contact to ATP. 3 residues coordinate Mg(2+): D311, E325, and N327.

This sequence belongs to the D-alanine--D-alanine ligase family. Requires Mg(2+) as cofactor. It depends on Mn(2+) as a cofactor.

Its subcellular location is the cytoplasm. It catalyses the reaction 2 D-alanine + ATP = D-alanyl-D-alanine + ADP + phosphate + H(+). It participates in cell wall biogenesis; peptidoglycan biosynthesis. Its function is as follows. Cell wall formation. This Ruminiclostridium cellulolyticum (strain ATCC 35319 / DSM 5812 / JCM 6584 / H10) (Clostridium cellulolyticum) protein is D-alanine--D-alanine ligase.